Reading from the N-terminus, the 421-residue chain is MQPLHTLLALLPLCRSTTALLAFPGAEGFGANAVGGRGGDVYVVTNLEDSGEGSLRDAVSETDRIVVFAVGGVINIEDRLVVSKRVTILGQTAPGDGITVYGNGWSFSNADDAIVRYIRVRMGRGGDSGKDGITIAEGSNMIFDHVSVSWGRDETFSISGTAENITVQDSIIAQGLETHSCGGLMQTDGGVSLFRNLYIDNKTRNPKVKGVNEFTNNVVYNWGGGGGYIAGDSSGQSFGNYFISGPSTSVTAFTRGNENFHGYVENNYYDPDQDGTLNGNELGVSSSNYGGMDIVDTKYDYPAAQYIMTPDEAVSYVTENVGASLVRDGVDSNLIDQVLSYGTDGALISDEDDFGGVGDLDGGETPTDTDGDGIPDDVETQLGTDPNIADSTEIDSSTGYSWLEVWANSLVPEGYASTRKC.

A signal peptide spans 1-19 (MQPLHTLLALLPLCRSTTA). Asn-164 and Asn-201 each carry an N-linked (GlcNAc...) asparagine glycan. Residue Arg-204 is part of the active site. The 36-residue stretch at 257–292 (NENFHGYVENNYYDPDQDGTLNGNELGVSSSNYGGM) folds into the EF-hand domain. Positions 270, 272, 274, 276, and 281 each coordinate Ca(2+). Residues 353-376 (DFGGVGDLDGGETPTDTDGDGIPD) are disordered. A compositionally biased stretch (acidic residues) spans 367–376 (TDTDGDGIPD).

This sequence belongs to the polysaccharide lyase 1 family. It depends on Ca(2+) as a cofactor.

Its subcellular location is the secreted. The catalysed reaction is Eliminative cleavage of (1-&gt;4)-alpha-D-galacturonan to give oligosaccharides with 4-deoxy-alpha-D-galact-4-enuronosyl groups at their non-reducing ends.. In terms of biological role, pectinolytic enzyme consist of four classes of enzymes: pectin lyase, polygalacturonase, pectin methylesterase and rhamnogalacturonase. Among pectinolytic enzymes, pectin lyase is the most important in depolymerization of pectin, since it cleaves internal glycosidic bonds of highly methylated pectins. Favors pectate, the anion, over pectin, the methyl ester. In Emericella nidulans (strain FGSC A4 / ATCC 38163 / CBS 112.46 / NRRL 194 / M139) (Aspergillus nidulans), this protein is Probable pectate lyase C (plyC).